We begin with the raw amino-acid sequence, 406 residues long: Arginine deiminase (406 aa).

Catalysis depends on C396, which acts as the Amidino-cysteine intermediate.

This sequence belongs to the arginine deiminase family.

Its subcellular location is the cytoplasm. The catalysed reaction is L-arginine + H2O = L-citrulline + NH4(+). The protein operates within amino-acid degradation; L-arginine degradation via ADI pathway; carbamoyl phosphate from L-arginine: step 1/2. The chain is Arginine deiminase from Vibrio vulnificus (strain CMCP6).